The chain runs to 453 residues: Ribulose bisphosphate carboxylase large chain (453 aa).

The propeptide occupies 1–2; sequence MS. Residue Pro-3 is modified to N-acetylproline. Lys-14 carries the post-translational modification N6,N6,N6-trimethyllysine. Substrate is bound by residues Asn-123 and Thr-173. The Proton acceptor role is filled by Lys-175. A substrate-binding site is contributed by Lys-177. Residues Lys-201, Asp-203, and Glu-204 each coordinate Mg(2+). An N6-carboxylysine modification is found at Lys-201. His-294 (proton acceptor) is an active-site residue. Substrate is bound by residues Arg-295, His-327, and Ser-379.

The protein belongs to the RuBisCO large chain family. Type I subfamily. In terms of assembly, heterohexadecamer of 8 large chains and 8 small chains; disulfide-linked. The disulfide link is formed within the large subunit homodimers. Mg(2+) is required as a cofactor. Post-translationally, the disulfide bond which can form in the large chain dimeric partners within the hexadecamer appears to be associated with oxidative stress and protein turnover.

The protein localises to the plastid. It is found in the chloroplast. It carries out the reaction 2 (2R)-3-phosphoglycerate + 2 H(+) = D-ribulose 1,5-bisphosphate + CO2 + H2O. It catalyses the reaction D-ribulose 1,5-bisphosphate + O2 = 2-phosphoglycolate + (2R)-3-phosphoglycerate + 2 H(+). Functionally, ruBisCO catalyzes two reactions: the carboxylation of D-ribulose 1,5-bisphosphate, the primary event in carbon dioxide fixation, as well as the oxidative fragmentation of the pentose substrate in the photorespiration process. Both reactions occur simultaneously and in competition at the same active site. This chain is Ribulose bisphosphate carboxylase large chain, found in Galium aparine (Catchweed bedstraw).